The chain runs to 116 residues: Tyrosine-protein phosphatase 20 (116 aa).

The 116-residue stretch at W1–V116 folds into the Tyrosine-protein phosphatase domain. D84 provides a ligand contact to substrate.

It belongs to the protein-tyrosine phosphatase family.

The enzyme catalyses O-phospho-L-tyrosyl-[protein] + H2O = L-tyrosyl-[protein] + phosphate. The polypeptide is Tyrosine-protein phosphatase 20 (STY-20) (Styela plicata (Wrinkled sea squirt)).